A 185-amino-acid chain; its full sequence is Ribosome-recycling factor (185 aa).

This sequence belongs to the RRF family.

Its subcellular location is the cytoplasm. Functionally, responsible for the release of ribosomes from messenger RNA at the termination of protein biosynthesis. May increase the efficiency of translation by recycling ribosomes from one round of translation to another. This chain is Ribosome-recycling factor, found in Mycobacterium leprae (strain Br4923).